The following is a 758-amino-acid chain: Calpain (758 aa).

The region spanning 99–397 is the Calpain catalytic domain; that stretch reads LWEDPDFPAN…FSRVEVCHLG (299 aa). Active-site residues include Cys154, His313, and Asn337. Positions 398-562 are domain III; sequence LESLEYNQNF…TSITEQELDE (165 aa). The tract at residues 563 to 582 is linker; it reads DNTNQGLPDDVIEALKLEDT. The interval 583 to 757 is domain IV; sequence LLDEDQEIEQ…AEDYLRFSVY (175 aa). Ca(2+) is bound by residues Asp641, Asn643, Thr645, His647, Glu652, Asp671, Asp673, Ser675, Tyr677, and Glu682. 2 EF-hand domains span residues 658–693 and 694–729; these read IQAK…AGYH and VSNR…LKTA.

The protein belongs to the peptidase C2 family.

Activated by free cytoplasmic calcium. Calpains are calcium-activated non-lysosomal thiol-proteases. The chain is Calpain from Schistosoma mansoni (Blood fluke).